The chain runs to 264 residues: Undecaprenyl-diphosphatase (264 aa).

Transmembrane regions (helical) follow at residues 42 to 62 (ESLL…LVVF), 82 to 102 (TQFS…GLLF), 109 to 129 (LFGG…LLLW), 146 to 166 (AFII…RSGA), 184 to 204 (FSFL…LMSG), 215 to 235 (ILAT…TWMI), and 243 to 263 (LSWF…FAYA).

The protein belongs to the UppP family.

The protein resides in the cell membrane. It catalyses the reaction di-trans,octa-cis-undecaprenyl diphosphate + H2O = di-trans,octa-cis-undecaprenyl phosphate + phosphate + H(+). In terms of biological role, catalyzes the dephosphorylation of undecaprenyl diphosphate (UPP). Confers resistance to bacitracin. This is Undecaprenyl-diphosphatase from Christiangramia forsetii (strain DSM 17595 / CGMCC 1.15422 / KT0803) (Gramella forsetii).